The sequence spans 156 residues: Snaclec alboaggregin-B subunit alpha (156 aa).

The first 23 residues, 1 to 23, serve as a signal peptide directing secretion; it reads MGRFIFVSFGLLVVFLSLSGTGA. One can recognise a C-type lectin domain in the interval 24-151; it reads DCPSDWSSFK…CEQKHIFMCK (128 aa). Intrachain disulfides connect cysteine 25–cysteine 36, cysteine 53–cysteine 150, and cysteine 125–cysteine 142.

It belongs to the snaclec family. Heterodimer of subunits alpha and beta; disulfide-linked. In terms of tissue distribution, expressed by the venom gland.

It localises to the secreted. Weakly agglutinates platelets at high doses by binding to GPIbalpha (GP1BA). This Trimeresurus albolabris (White-lipped pit viper) protein is Snaclec alboaggregin-B subunit alpha.